Consider the following 481-residue polypeptide: Cysteine--tRNA ligase (481 aa).

Position 29 (Cys29) interacts with Zn(2+). Positions 31–41 match the 'HIGH' region motif; it reads PTVYDYSHLGH. Residues Cys210, His235, and Glu239 each coordinate Zn(2+). Residues 272–276 carry the 'KMSKS' region motif; the sequence is KMSKS. Position 275 (Lys275) interacts with ATP.

Belongs to the class-I aminoacyl-tRNA synthetase family. Monomer. Requires Zn(2+) as cofactor.

The protein localises to the cytoplasm. The catalysed reaction is tRNA(Cys) + L-cysteine + ATP = L-cysteinyl-tRNA(Cys) + AMP + diphosphate. This is Cysteine--tRNA ligase from Anaeromyxobacter sp. (strain K).